We begin with the raw amino-acid sequence, 212 residues long: Ropporin-1 (212 aa).

The RIIa domain maps to 12 to 43; that stretch reads PELPELLKQFTKAAIRTQPPDLIQWAAEYFGA. Serine 56 carries the phosphoserine modification. The segment at 209-212 is interaction with RHPN1; it reads VRLE.

This sequence belongs to the ropporin family. As to quaternary structure, homodimer. Interacts with AKAP3. May interact with SPA17. Interacts with RHPN1. Interacts with FSCB; the interaction increases upon spermatozoa capacitation conditions. Interacts with CFAP61. Post-translationally, sumoylated, sumoylation decreases upon spermatozoa capacitation conditions.

It localises to the cell projection. The protein localises to the cilium. It is found in the flagellum. Its function is as follows. Important for male fertility. With ROPN1L, involved in fibrous sheath integrity and sperm motility, plays a role in PKA-dependent signaling processes required for spermatozoa capacitation. The polypeptide is Ropporin-1 (Ropn1) (Rattus norvegicus (Rat)).